We begin with the raw amino-acid sequence, 65 residues long: Large ribosomal subunit protein bL31 (65 aa).

The Zn(2+) site is built by C16, C18, C36, and C39.

The protein belongs to the bacterial ribosomal protein bL31 family. Type A subfamily. Part of the 50S ribosomal subunit. Requires Zn(2+) as cofactor.

Its function is as follows. Binds the 23S rRNA. This is Large ribosomal subunit protein bL31 from Geotalea uraniireducens (strain Rf4) (Geobacter uraniireducens).